A 93-amino-acid chain; its full sequence is UPF0297 protein PEPE_1262 (93 aa).

The protein belongs to the UPF0297 family.

The protein is UPF0297 protein PEPE_1262 of Pediococcus pentosaceus (strain ATCC 25745 / CCUG 21536 / LMG 10740 / 183-1w).